The sequence spans 312 residues: Olfactory receptor 1D5 (312 aa).

The Extracellular portion of the chain corresponds to methionine 1–glutamine 25. An N-linked (GlcNAc...) asparagine glycan is attached at asparagine 5. The chain crosses the membrane as a helical span at residues isoleucine 26–isoleucine 49. Residues serine 50 to threonine 57 are Cytoplasmic-facing. A helical membrane pass occupies residues proline 58 to proline 79. At lysine 80–glutamine 100 the chain is on the extracellular side. An intrachain disulfide couples cysteine 97 to cysteine 189. Residues leucine 101 to tyrosine 120 traverse the membrane as a helical segment. Over aspartate 121–leucine 140 the chain is Cytoplasmic. A helical membrane pass occupies residues cysteine 141–leucine 158. The Extracellular segment spans residues leucine 159–histidine 196. Residues threonine 197 to cysteine 220 traverse the membrane as a helical segment. The Cytoplasmic portion of the chain corresponds to isoleucine 221–alanine 237. A helical membrane pass occupies residues phenylalanine 238–leucine 260. At glutamine 261–serine 271 the chain is on the extracellular side. Residues valine 272–leucine 291 form a helical membrane-spanning segment. At arginine 292–lysine 312 the chain is on the cytoplasmic side.

This sequence belongs to the G-protein coupled receptor 1 family.

It is found in the cell membrane. Its function is as follows. Odorant receptor. The polypeptide is Olfactory receptor 1D5 (OR1D5) (Pan paniscus (Pygmy chimpanzee)).